Here is a 198-residue protein sequence, read N- to C-terminus: Recombination protein RecR (198 aa).

The segment at 56-71 (CEICGNVSEQATCSIC) adopts a C4-type zinc-finger fold. A Toprim domain is found at 79–174 (ALICVVEEAK…RVTRLASGLP (96 aa)).

This sequence belongs to the RecR family.

In terms of biological role, may play a role in DNA repair. It seems to be involved in an RecBC-independent recombinational process of DNA repair. It may act with RecF and RecO. This is Recombination protein RecR from Leifsonia xyli subsp. xyli (strain CTCB07).